The primary structure comprises 1091 residues: Protein diaphanous (1091 aa).

Residues 1–37 are disordered; sequence MSRHEKTKSTGGGLLDSLFGRPSKSKGGTISSGTLAH. Residues 1 to 56 form a basic region region; it reads MSRHEKTKSTGGGLLDSLFGRPSKSKGGTISSGTLAHGGRPVSADNYVVPGVEDFE. Over residues 25–34 the composition is skewed to low complexity; that stretch reads SKGGTISSGT. A GBD/FH3 domain is found at 59–431; that stretch reads IQQLSVAELD…QIVFHKGYCD (373 aa). Residues 455–496 adopt a coiled-coil conformation; sequence KAKESKRSEEYEKKIEQLESAKQEAEAKAAHLEEKVKLMEAN. Disordered regions lie at residues 499–589, 994–1021, and 1039–1072; these read AAPS…MMMG, RLQE…DMDA, and GSAF…RTRV. The segment covering 512–572 has biased composition (pro residues); the sequence is PMPPPPPGGG…MGGPPPPPMP (61 aa). Residues 512–596 form the FH1 domain; it reads PMPPPPPGGG…MMGPMVPVLP (85 aa). The FH2 domain maps to 601 to 1001; that stretch reads PKKKWDVKNP…KRRLQEAREQ (401 aa). Residues 994 to 1010 show a composition bias toward basic and acidic residues; that stretch reads RLQEAREQSAREQQERQ. The 33-residue stretch at 1022 to 1054 folds into the DAD domain; sequence PQTQEGVMDSLLEALQTGSAFGQRNRQARRQRP.

This sequence belongs to the formin homology family. Diaphanous subfamily. In terms of assembly, may interact (via CBD/FH3 domain) with Rho1.

Its subcellular location is the cytoplasm. The protein resides in the cytoskeleton. It localises to the cleavage furrow. The protein localises to the apical cell membrane. In terms of biological role, required for cytokinesis in both mitosis and meiosis. Has a role in actin cytoskeleton organization and is essential for many, if not all, actin-mediated events involving membrane invagination. May serve as a mediator between signaling molecules and actin organizers at specific phases of the cell cycle. Possible component of the contractile ring or may control its function. The protein is Protein diaphanous (dia) of Drosophila melanogaster (Fruit fly).